A 591-amino-acid polypeptide reads, in one-letter code: Transcription factor COE1-A (591 aa).

The interval 63 to 66 (RKSN) is interaction with DNA. A C5-type zinc finger spans residues 151 to 170 (CRVLLTHEIMCSRCCDKKSC). 2 interaction with DNA regions span residues 197 to 204 (NCLKNAGN) and 236 to 239 (NNSK). An IPT/TIG domain is found at 262–344 (PCIKAISPSE…CKGTPGRFIY (83 aa)). Residues 454-466 (ANQGFSRNTSSVS) show a composition bias toward polar residues. The tract at residues 454-484 (ANQGFSRNTSSVSPHGYVPSTTPQQSSYSTV) is disordered. Residues 471–484 (VPSTTPQQSSYSTV) show a composition bias toward low complexity.

Belongs to the COE family. In terms of assembly, forms either a homodimer or a heterodimer with a related family member. Detected in B cells.

It localises to the nucleus. Functionally, transcriptional activator. This Danio rerio (Zebrafish) protein is Transcription factor COE1-A.